Reading from the N-terminus, the 983-residue chain is 3',5'-cyclic-AMP phosphodiesterase, isoforms N/G (983 aa).

Disordered regions lie at residues 31–333, 349–370, 400–429, and 528–566; these read MPEG…SAGL, SDSDFEMSPKSMSRNSSIASES, VPASNKSRRPNQSSSASRSGNPPGAPLSQG, and SAGQYARSRSPRGPPMSQISGVKRPLSHTNSFTGERLPT. Over residues 35–50 the composition is skewed to basic and acidic residues; that stretch reads GEDHRGDLNQKGENNN. Residues 51–60 show a composition bias toward polar residues; sequence RPRPSISLAN. Residues 84–97 show a composition bias toward gly residues; sequence SVGGGDSDGGGEAI. 2 stretches are compositionally biased toward low complexity: residues 112-121 and 145-167; these read LSTTTSNSSS and QLQQHSSSLSNGNRGNRGLSQRS. Residues 174–199 are compositionally biased toward acidic residues; that stretch reads AEGEEFDVDPMDEDDEDQTYDRETEE. Composition is skewed to low complexity over residues 219–234 and 248–261; these read SSLFSRSDSSATTTSS and AASILSSSMCSDLM. Polar residues-rich tracts occupy residues 268 to 287, 358 to 368, and 401 to 419; these read STATEYSVKSVTTGNTSQRR, KSMSRNSSIAS, and PASNKSRRPNQSSSASRSG. A PDEase domain is found at 569 to 898; that stretch reads VETPRENELG…DYYQSMIPPS (330 aa). His-645 serves as the catalytic Proton donor. 645 to 649 serves as a coordination point for 3',5'-cyclic AMP; the sequence is HNSLH. The a divalent metal cation site is built by His-649, His-685, Asp-686, and Asp-803. 3',5'-cyclic AMP contacts are provided by Asp-686, Asp-803, and Gln-854. A compositionally biased stretch (acidic residues) spans 920–937; it reads EESDQENLAELEEGDESG. The interval 920-983 is disordered; sequence EESDQENLAE…CQNQPQHGGM (64 aa). Residues 938–955 show a composition bias toward low complexity; that stretch reads GESTTTGTTGTTAASALS. Gly residues predominate over residues 956 to 967; the sequence is GAGGGGGGGGGM. The span at 973–983 shows a compositional bias: polar residues; the sequence is GCQNQPQHGGM.

This sequence belongs to the cyclic nucleotide phosphodiesterase family. PDE4 subfamily. As to quaternary structure, monomer. A divalent metal cation serves as cofactor.

The catalysed reaction is 3',5'-cyclic AMP + H2O = AMP + H(+). The protein operates within purine metabolism; 3',5'-cyclic AMP degradation; AMP from 3',5'-cyclic AMP: step 1/1. Its function is as follows. Hydrolyzes the second messenger cAMP, which is a key regulator of many important physiological processes. Vital for female fertility. Required for learning/memory. This chain is 3',5'-cyclic-AMP phosphodiesterase, isoforms N/G, found in Drosophila melanogaster (Fruit fly).